We begin with the raw amino-acid sequence, 607 residues long: Guanine nucleotide-binding protein-like 1 (607 aa).

Over residues Met1–Lys14 the composition is skewed to basic residues. Residues Met1–Tyr81 are disordered. Residues Gln15–Leu26 are compositionally biased toward basic and acidic residues. A phosphoserine mark is found at Ser32, Ser33, and Ser34. Phosphothreonine occurs at positions 48 and 50. Phosphoserine is present on residues Ser51 and Ser68. Residues Trp178–Pro418 form the CP-type G domain. Asn225–Asp228 is a binding site for GTP. At Ser324 the chain carries Phosphoserine. Residues Gly367 to Ser374 and Asp411 to Leu415 contribute to the GTP site. A disordered region spans residues Gly544 to Cys607. Residues Gly550–Pro585 show a composition bias toward acidic residues. Phosphoserine is present on residues Ser561, Ser562, and Ser563.

It belongs to the TRAFAC class YlqF/YawG GTPase family.

Its function is as follows. Possible regulatory or functional link with the histocompatibility cluster. This chain is Guanine nucleotide-binding protein-like 1 (Gnl1), found in Mus musculus (Mouse).